Reading from the N-terminus, the 1351-residue chain is Tripartite motif-containing protein 66 (1351 aa).

A B box-type 1; atypical zinc finger spans residues 105–150 (MARNCSECKEKRAAHILCTYCNRWLCSSCTEEHRHSPVPGGPFFPR). Zn(2+) is bound by residues Cys109, Cys112, Cys133, His139, Cys169, His172, Cys192, and His197. Residues 164 to 205 (DFTLYCPLHTQEVLKLFCETCDMLTCHSCLVVEHKEHRCRHV) form a B box-type 2 zinc finger. A coiled-coil region spans residues 234–304 (AKQIEDRIFE…IMVLNRQFEH (71 aa)). Disordered stretches follow at residues 542 to 608 (FGHH…CSQN), 663 to 730 (APVQ…VRKH), and 857 to 895 (CPLQ…DPSL). The segment covering 560-588 (QLPPPPPPLPHPPPPLPPPPQQPHPPLPP) has biased composition (pro residues). Over residues 664-676 (PVQSQSQEETLQA) the composition is skewed to polar residues. Residues 872–884 (TGSSSSSGRTSGS) show a composition bias toward low complexity. The PxVxL motif signature appears at 995–999 (PYVRL). The segment at 1067–1098 (TSLAGQRPPEVEGTSPEEHRLIPRTPGAKKGP) is disordered. The PHD-type zinc-finger motif lies at 1105-1152 (EDFCAVCLNGGELLCCDRCPKVFHLSCHVPALLSFPGGEWVCTLCRSL). In terms of domain architecture, Bromo spans 1176-1282 (GLSMYDQKKC…VFFEGWLKEI (107 aa)). A disordered region spans residues 1289–1351 (AQPRQEDSDS…FRLANSISQV (63 aa)).

Can form homodimers and heterodimers. Interacts with CBX5, CBX1 and CBX3 via PxVxL motif.

The protein localises to the nucleus. In terms of biological role, may function as transcription repressor; The repressive effects are mediated, at least in part, by recruitment of deacetylase activity. May play a role as negative regulator of postmeiotic genes acting through CBX3 complex formation and centromere association. The polypeptide is Tripartite motif-containing protein 66 (TRIM66) (Homo sapiens (Human)).